The primary structure comprises 90 residues: Putative sodium channel toxin Ts35 (90 aa).

A signal peptide spans 1–22 (QDEVGLGSCSVIFVVGNEEGEA). The LCN-type CS-alpha/beta domain maps to 23–87 (KDGYAVGGDR…WGNPTLGPCL (65 aa)). Intrachain disulfides connect Cys33-Cys86, Cys37-Cys61, Cys46-Cys66, and Cys50-Cys68.

It belongs to the long (4 C-C) scorpion toxin superfamily. Sodium channel inhibitor family. As to expression, expressed by the venom gland.

The protein resides in the secreted. In terms of biological role, putative sodium channel toxin. The chain is Putative sodium channel toxin Ts35 from Tityus serrulatus (Brazilian scorpion).